The sequence spans 241 residues: 1-(5-phosphoribosyl)-5-[(5-phosphoribosylamino)methylideneamino] imidazole-4-carboxamide isomerase (241 aa).

The active-site Proton acceptor is the Asp-8. Asp-130 acts as the Proton donor in catalysis.

It belongs to the HisA/HisF family.

It localises to the cytoplasm. The catalysed reaction is 1-(5-phospho-beta-D-ribosyl)-5-[(5-phospho-beta-D-ribosylamino)methylideneamino]imidazole-4-carboxamide = 5-[(5-phospho-1-deoxy-D-ribulos-1-ylimino)methylamino]-1-(5-phospho-beta-D-ribosyl)imidazole-4-carboxamide. It functions in the pathway amino-acid biosynthesis; L-histidine biosynthesis; L-histidine from 5-phospho-alpha-D-ribose 1-diphosphate: step 4/9. The protein is 1-(5-phosphoribosyl)-5-[(5-phosphoribosylamino)methylideneamino] imidazole-4-carboxamide isomerase of Francisella philomiragia subsp. philomiragia (strain ATCC 25017 / CCUG 19701 / FSC 153 / O#319-036).